Consider the following 309-residue polypeptide: Glutaminase (309 aa).

7 residues coordinate substrate: S64, N114, E160, N167, Y191, Y243, and V261.

This sequence belongs to the glutaminase family. In terms of assembly, homotetramer.

The enzyme catalyses L-glutamine + H2O = L-glutamate + NH4(+). In Rhizobium etli (strain CIAT 652), this protein is Glutaminase.